Here is a 750-residue protein sequence, read N- to C-terminus: uncharacterized protein (750 aa).

5 consecutive transmembrane segments (helical) span residues phenylalanine 2–isoleucine 22, serine 33–isoleucine 53, leucine 79–leucine 99, leucine 116–leucine 136, and isoleucine 143–alanine 163. Disordered regions lie at residues aspartate 385–glutamate 461 and asparagine 571–alanine 651. A compositionally biased stretch (basic and acidic residues) spans glutamate 398–aspartate 411. Polar residues predominate over residues threonine 412–aspartate 424. Over residues glutamine 425–threonine 436 the composition is skewed to low complexity. Residues alanine 437–asparagine 451 show a composition bias toward polar residues. The span at asparagine 452–glutamate 461 shows a compositional bias: basic and acidic residues. The segment covering aspartate 618–threonine 629 has biased composition (polar residues). Residues alanine 724–phenylalanine 744 traverse the membrane as a helical segment.

It to M.pneumoniae MPN_335.

Its subcellular location is the cell membrane. This is an uncharacterized protein from Mycoplasma pneumoniae (strain ATCC 29342 / M129 / Subtype 1) (Mycoplasmoides pneumoniae).